Here is a 116-residue protein sequence, read N- to C-terminus: MPAPRTICSLLLLSMLWMDLAMAGSSFLSPEHQKLQRKEPKKPSGRLKPRALEGQFDPDVGSQEEGAEDELEIRFNAPFNIGIKLSGAQSLQHGQTLGKFLQDILWEEAEETLADE.

Positions 1-23 are cleaved as a signal peptide; that stretch reads MPAPRTICSLLLLSMLWMDLAMA. A lipid anchor (O-decanoyl serine; alternate) is attached at S26. Residue S26 is the site of O-hexanoyl serine; alternate attachment. S26 carries the O-octanoyl serine; alternate lipid modification. Residues 29 to 67 form a disordered region; that stretch reads SPEHQKLQRKEPKKPSGRLKPRALEGQFDPDVGSQEEGA. Over residues 31 to 42 the composition is skewed to basic and acidic residues; that stretch reads EHQKLQRKEPKK. The propeptide at 51-74 is removed in mature form; the sequence is ALEGQFDPDVGSQEEGAEDELEIR. Leucine amide is present on L97. Positions 98–116 are cleaved as a propeptide — removed in mature form; sequence GKFLQDILWEEAEETLADE.

The protein belongs to the motilin family. In terms of processing, O-octanoylated by GOAT/MBOAT4. O-octanoylation is essential for ghrelin activity. Post-translationally, amidation of Leu-97 is essential for obestatin activity.

Its subcellular location is the secreted. Its function is as follows. Ghrelin is the ligand for growth hormone secretagogue receptor type 1 (GHSR). Induces the release of growth hormone from the pituitary. Has an appetite-stimulating effect, induces adiposity and stimulates gastric acid secretion. Involved in growth regulation. Functionally, obestatin may be the ligand for GPR39. May have an appetite-reducing effect resulting in decreased food intake. May reduce gastric emptying activity and jejunal motility. In Capra hircus (Goat), this protein is Appetite-regulating hormone (GHRL).